We begin with the raw amino-acid sequence, 256 residues long: Type III pantothenate kinase (256 aa).

6-13 (DIGNTHIV) contributes to the ATP binding site. 109–112 (GADR) lines the substrate pocket. The Proton acceptor role is filled by aspartate 111. A K(+)-binding site is contributed by aspartate 132. Position 135 (threonine 135) interacts with ATP. Position 186 (threonine 186) interacts with substrate.

It belongs to the type III pantothenate kinase family. As to quaternary structure, homodimer. It depends on NH4(+) as a cofactor. Requires K(+) as cofactor.

It is found in the cytoplasm. It carries out the reaction (R)-pantothenate + ATP = (R)-4'-phosphopantothenate + ADP + H(+). The protein operates within cofactor biosynthesis; coenzyme A biosynthesis; CoA from (R)-pantothenate: step 1/5. Functionally, catalyzes the phosphorylation of pantothenate (Pan), the first step in CoA biosynthesis. The sequence is that of Type III pantothenate kinase from Fusobacterium nucleatum subsp. nucleatum (strain ATCC 25586 / DSM 15643 / BCRC 10681 / CIP 101130 / JCM 8532 / KCTC 2640 / LMG 13131 / VPI 4355).